We begin with the raw amino-acid sequence, 198 residues long: HTH-type transcriptional regulator BetI (198 aa).

In terms of domain architecture, HTH tetR-type spans 8-68 (KIRRPQLVSA…ETMRDILRQL (61 aa)). Residues 31-50 (SVSLISQEAGVSSGIINHYF) constitute a DNA-binding region (H-T-H motif).

It participates in amine and polyamine biosynthesis; betaine biosynthesis via choline pathway [regulation]. Repressor involved in the biosynthesis of the osmoprotectant glycine betaine. It represses transcription of the choline transporter BetT and the genes of BetAB involved in the synthesis of glycine betaine. The chain is HTH-type transcriptional regulator BetI from Vibrio vulnificus (strain YJ016).